The primary structure comprises 437 residues: Replication factor C large subunit (437 aa).

48 to 55 contributes to the ATP binding site; the sequence is GPPGVGKT. Positions 410–437 are disordered; the sequence is TQASKPTSEEKAEKSKKYYPKRSSSRKT. Basic and acidic residues predominate over residues 416–425; the sequence is TSEEKAEKSK. A compositionally biased stretch (basic residues) spans 426 to 437; sequence KYYPKRSSSRKT.

This sequence belongs to the activator 1 small subunits family. RfcL subfamily. Heteromultimer composed of small subunits (RfcS) and large subunits (RfcL).

Functionally, part of the RFC clamp loader complex which loads the PCNA sliding clamp onto DNA. In Sulfolobus acidocaldarius (strain ATCC 33909 / DSM 639 / JCM 8929 / NBRC 15157 / NCIMB 11770), this protein is Replication factor C large subunit.